Consider the following 509-residue polypeptide: Type II methyltransferase M.BsoBI (509 aa).

Belongs to the N(4)/N(6)-methyltransferase family. N(4) subfamily.

It carries out the reaction a 2'-deoxycytidine in DNA + S-adenosyl-L-methionine = an N(4)-methyl-2'-deoxycytidine in DNA + S-adenosyl-L-homocysteine + H(+). In terms of biological role, an alpha subtype methylase that recognizes the double-stranded sequence 5'-CYCGRG-3', methylates C-1 on both strands, and protects the DNA from cleavage by the BsoBI endonuclease. The chain is Type II methyltransferase M.BsoBI from Geobacillus stearothermophilus (Bacillus stearothermophilus).